A 46-amino-acid chain; its full sequence is Photosystem II reaction center protein K (46 aa).

Residues 1-9 (MSTLPILLA) constitute a propeptide that is removed on maturation. A helical membrane pass occupies residues 25 to 45 (LPSIPVLFLLLAFVWQAAVSF).

The protein belongs to the PsbK family. In terms of assembly, PSII is composed of 1 copy each of membrane proteins PsbA, PsbB, PsbC, PsbD, PsbE, PsbF, PsbH, PsbI, PsbJ, PsbK, PsbL, PsbM, PsbT, PsbX, PsbY, PsbZ, Psb30/Ycf12, at least 3 peripheral proteins of the oxygen-evolving complex and a large number of cofactors. It forms dimeric complexes.

Its subcellular location is the plastid. The protein localises to the chloroplast thylakoid membrane. One of the components of the core complex of photosystem II (PSII). PSII is a light-driven water:plastoquinone oxidoreductase that uses light energy to abstract electrons from H(2)O, generating O(2) and a proton gradient subsequently used for ATP formation. It consists of a core antenna complex that captures photons, and an electron transfer chain that converts photonic excitation into a charge separation. This is Photosystem II reaction center protein K from Nephroselmis olivacea (Green alga).